The primary structure comprises 986 residues: Bifunctional glutamine synthetase adenylyltransferase/adenylyl-removing enzyme (986 aa).

Residues M1–E482 are adenylyl removase. An adenylyl transferase region spans residues S486 to G986.

This sequence belongs to the GlnE family. It depends on Mg(2+) as a cofactor.

The enzyme catalyses [glutamine synthetase]-O(4)-(5'-adenylyl)-L-tyrosine + phosphate = [glutamine synthetase]-L-tyrosine + ADP. The catalysed reaction is [glutamine synthetase]-L-tyrosine + ATP = [glutamine synthetase]-O(4)-(5'-adenylyl)-L-tyrosine + diphosphate. Functionally, involved in the regulation of glutamine synthetase GlnA, a key enzyme in the process to assimilate ammonia. When cellular nitrogen levels are high, the C-terminal adenylyl transferase (AT) inactivates GlnA by covalent transfer of an adenylyl group from ATP to specific tyrosine residue of GlnA, thus reducing its activity. Conversely, when nitrogen levels are low, the N-terminal adenylyl removase (AR) activates GlnA by removing the adenylyl group by phosphorolysis, increasing its activity. The regulatory region of GlnE binds the signal transduction protein PII (GlnB) which indicates the nitrogen status of the cell. This is Bifunctional glutamine synthetase adenylyltransferase/adenylyl-removing enzyme from Caulobacter vibrioides (strain ATCC 19089 / CIP 103742 / CB 15) (Caulobacter crescentus).